Consider the following 271-residue polypeptide: Tryptophan synthase alpha chain (271 aa).

Active-site proton acceptor residues include Glu47 and Asp58.

The protein belongs to the TrpA family. In terms of assembly, tetramer of two alpha and two beta chains.

It carries out the reaction (1S,2R)-1-C-(indol-3-yl)glycerol 3-phosphate + L-serine = D-glyceraldehyde 3-phosphate + L-tryptophan + H2O. It participates in amino-acid biosynthesis; L-tryptophan biosynthesis; L-tryptophan from chorismate: step 5/5. Functionally, the alpha subunit is responsible for the aldol cleavage of indoleglycerol phosphate to indole and glyceraldehyde 3-phosphate. The protein is Tryptophan synthase alpha chain of Thermus thermophilus (strain ATCC BAA-163 / DSM 7039 / HB27).